A 380-amino-acid chain; its full sequence is Chaperone protein DnaJ (380 aa).

The J domain occupies 5 to 69 (DYYEILGVSK…QKRAHYDQFG (65 aa)). The segment at 135-217 (GKETDIEIPR…CGGTGRVKRR (83 aa)) adopts a CR-type zinc-finger fold. Cys-148, Cys-151, Cys-165, Cys-168, Cys-191, Cys-194, Cys-205, and Cys-208 together coordinate Zn(2+). CXXCXGXG motif repeat units follow at residues 148–155 (CNTCHGTG), 165–172 (CSYCHGTG), 191–198 (CPYCGGTG), and 205–212 (CTTCGGTG).

It belongs to the DnaJ family. As to quaternary structure, homodimer. The cofactor is Zn(2+).

The protein localises to the cytoplasm. Participates actively in the response to hyperosmotic and heat shock by preventing the aggregation of stress-denatured proteins and by disaggregating proteins, also in an autonomous, DnaK-independent fashion. Unfolded proteins bind initially to DnaJ; upon interaction with the DnaJ-bound protein, DnaK hydrolyzes its bound ATP, resulting in the formation of a stable complex. GrpE releases ADP from DnaK; ATP binding to DnaK triggers the release of the substrate protein, thus completing the reaction cycle. Several rounds of ATP-dependent interactions between DnaJ, DnaK and GrpE are required for fully efficient folding. Also involved, together with DnaK and GrpE, in the DNA replication of plasmids through activation of initiation proteins. This Parageobacillus thermoglucosidasius (Geobacillus thermoglucosidasius) protein is Chaperone protein DnaJ.